The chain runs to 376 residues: Probable allantoicase (376 aa).

The protein belongs to the allantoicase family.

It carries out the reaction allantoate + H2O = (S)-ureidoglycolate + urea. It participates in nitrogen metabolism; (S)-allantoin degradation; (S)-ureidoglycolate from allantoate (aminidohydrolase route): step 1/1. The chain is Probable allantoicase from Streptomyces avermitilis (strain ATCC 31267 / DSM 46492 / JCM 5070 / NBRC 14893 / NCIMB 12804 / NRRL 8165 / MA-4680).